A 147-amino-acid chain; its full sequence is Putative 2'-deoxynucleoside 5'-phosphate N-hydrolase 1 (147 aa).

Residues 10–16 (YFCGSIR), Tyr-25, His-42, Glu-90, and 114–116 (SAM) each bind substrate.

This sequence belongs to the 2'-deoxynucleoside 5'-phosphate N-hydrolase 1 family. In terms of assembly, monomer and homodimer.

The protein localises to the cytoplasm. Its subcellular location is the nucleus. It catalyses the reaction a pyrimidine 2'-deoxyribonucleoside 5'-phosphate + H2O = a pyrimidine nucleobase + 2-deoxy-D-ribose 5-phosphate. The enzyme catalyses a purine 2'-deoxyribonucleoside 5'-phosphate + H2O = a purine nucleobase + 2-deoxy-D-ribose 5-phosphate. Catalyzes the cleavage of the N-glycosidic bond of deoxyribonucleoside 5'-monophosphates to yield deoxyribose 5-phosphate and a purine or pyrimidine base. In Nematostella vectensis (Starlet sea anemone), this protein is Putative 2'-deoxynucleoside 5'-phosphate N-hydrolase 1.